The primary structure comprises 424 residues: Serine--tRNA ligase (424 aa).

Residue 229 to 231 (TAE) participates in L-serine binding. Position 260-262 (260-262 (RRE)) interacts with ATP. Glu-283 is an L-serine binding site. 347 to 350 (EVSS) is an ATP binding site. Residue Ser-383 participates in L-serine binding.

This sequence belongs to the class-II aminoacyl-tRNA synthetase family. Type-1 seryl-tRNA synthetase subfamily. As to quaternary structure, homodimer. The tRNA molecule binds across the dimer.

The protein localises to the cytoplasm. It carries out the reaction tRNA(Ser) + L-serine + ATP = L-seryl-tRNA(Ser) + AMP + diphosphate + H(+). The catalysed reaction is tRNA(Sec) + L-serine + ATP = L-seryl-tRNA(Sec) + AMP + diphosphate + H(+). Its pathway is aminoacyl-tRNA biosynthesis; selenocysteinyl-tRNA(Sec) biosynthesis; L-seryl-tRNA(Sec) from L-serine and tRNA(Sec): step 1/1. Functionally, catalyzes the attachment of serine to tRNA(Ser). Is also able to aminoacylate tRNA(Sec) with serine, to form the misacylated tRNA L-seryl-tRNA(Sec), which will be further converted into selenocysteinyl-tRNA(Sec). The polypeptide is Serine--tRNA ligase (Roseiflexus castenholzii (strain DSM 13941 / HLO8)).